A 184-amino-acid polypeptide reads, in one-letter code: Probable chorismate pyruvate-lyase 1 (184 aa).

Substrate-binding residues include Arg70, Leu108, and Glu166.

This sequence belongs to the UbiC family.

It localises to the cytoplasm. It carries out the reaction chorismate = 4-hydroxybenzoate + pyruvate. It functions in the pathway cofactor biosynthesis; ubiquinone biosynthesis. Its function is as follows. Removes the pyruvyl group from chorismate, with concomitant aromatization of the ring, to provide 4-hydroxybenzoate (4HB) for the ubiquinone pathway. The protein is Probable chorismate pyruvate-lyase 1 of Burkholderia pseudomallei (strain 1710b).